A 310-amino-acid chain; its full sequence is Malate dehydrogenase (310 aa).

Residues 7 to 12 (GAGNVG) and D32 contribute to the NAD(+) site. Substrate contacts are provided by R81 and R87. NAD(+) contacts are provided by residues N94 and 117 to 119 (VSN). Substrate-binding residues include N119 and R150. Catalysis depends on H174, which acts as the Proton acceptor.

This sequence belongs to the LDH/MDH superfamily. MDH type 3 family. In terms of assembly, homotetramer; arranged as a dimer of dimers.

It carries out the reaction (S)-malate + NAD(+) = oxaloacetate + NADH + H(+). In terms of biological role, catalyzes the reversible oxidation of malate to oxaloacetate. The chain is Malate dehydrogenase from Chlorobaculum tepidum (strain ATCC 49652 / DSM 12025 / NBRC 103806 / TLS) (Chlorobium tepidum).